A 1630-amino-acid polypeptide reads, in one-letter code: Separin (1630 aa).

The interval 1016–1037 (SKHSTGLKLCDSPRSSSMTPRG) is disordered. The region spanning 1443-1542 (EDNISMILNP…SAAMKYYGKL (100 aa)) is the Peptidase C50 domain. Cys1531 is an active-site residue.

As to quaternary structure, may bind calcium. Interacts with PDS1. Interacts with MCD1.

The protein localises to the nucleus. It is found in the cytoplasm. Its subcellular location is the cytoskeleton. It localises to the microtubule organizing center. The protein resides in the spindle pole body. The enzyme catalyses All bonds known to be hydrolyzed by this endopeptidase have arginine in P1 and an acidic residue in P4. P6 is often occupied by an acidic residue or by a hydroxy-amino-acid residue, the phosphorylation of which enhances cleavage.. With respect to regulation, it is inactivated via its interaction with PDS1, which probably covers its active site. PDS1 degradation at anaphase, liberates it and triggers MCD1 cleavage. Its function is as follows. Caspase-like protease, which plays a central role in the chromosome segregation by cleaving the MCD1/SCC1 subunit of the cohesin complex at the onset of anaphase. During most of the cell cycle, it is inactivated by securin/PDS1 protein. It also promotes anaphase spindle elongation. A component of the FEAR (CDC14 early anaphase release) network which promotes CDC14 release from the nucleolus during early anaphase. Cleaves SLK19. This is Separin (ESP1) from Saccharomyces cerevisiae (strain ATCC 204508 / S288c) (Baker's yeast).